The primary structure comprises 236 residues: Hydroxyacylglutathione hydrolase (236 aa).

The Zn(2+) site is built by histidine 52, histidine 54, aspartate 56, histidine 57, histidine 108, aspartate 125, and histidine 163.

This sequence belongs to the metallo-beta-lactamase superfamily. Glyoxalase II family. Monomer. Zn(2+) serves as cofactor.

The enzyme catalyses an S-(2-hydroxyacyl)glutathione + H2O = a 2-hydroxy carboxylate + glutathione + H(+). It participates in secondary metabolite metabolism; methylglyoxal degradation; (R)-lactate from methylglyoxal: step 2/2. Thiolesterase that catalyzes the hydrolysis of S-D-lactoyl-glutathione to form glutathione and D-lactic acid. The chain is Hydroxyacylglutathione hydrolase from Mannheimia succiniciproducens (strain KCTC 0769BP / MBEL55E).